The sequence spans 232 residues: MRVLLIEDDSAIAQSIELMLKSESFNVYTTDLGEEGIDLGKLYDYDIILLDLNLPDMSGYEVLRTLRLSKVKTPILILSGMAGIEDKVRGLGFGADDYMTKPFHKDELIARIHAIVRRSKGHAQSVITTGDLVVNLDAKTVEVSGQRVHLTGKEYQMLELLSLRKGTTLTKEMFLNHLYGGMDEPELKIIDVFICKLRKKLDAVSGSQSYIETVWGRGYVLREPDAEMRESA.

The Response regulatory domain maps to 2–116 (RVLLIEDDSA…ELIARIHAIV (115 aa)). At Asp51 the chain carries 4-aspartylphosphate. A DNA-binding region (ompR/PhoB-type) is located at residues 124–223 (QSVITTGDLV…VWGRGYVLRE (100 aa)).

The protein localises to the cytoplasm. Functionally, essential protein that plays a role in the control of cell division, possibly through the transcriptional regulation of ccrM, rpoD, pleC, minC and ftsZ genes. The polypeptide is Cell cycle response regulator CtrA (ctrA) (Brucella anthropi (strain ATCC 49188 / DSM 6882 / CCUG 24695 / JCM 21032 / LMG 3331 / NBRC 15819 / NCTC 12168 / Alc 37) (Ochrobactrum anthropi)).